Reading from the N-terminus, the 225-residue chain is Ribonuclease 3 (225 aa).

The 123-residue stretch at 5-127 (MNKLTSKLGY…IIGAIYLDSD (123 aa)) folds into the RNase III domain. Glu40 lines the Mg(2+) pocket. The active site involves Asp44. The Mg(2+) site is built by Asp113 and Glu116. Glu116 is an active-site residue. One can recognise a DRBM domain in the interval 154–224 (DPKTRLQEFL…AETALEQLTN (71 aa)).

The protein belongs to the ribonuclease III family. As to quaternary structure, homodimer. Requires Mg(2+) as cofactor.

It is found in the cytoplasm. It carries out the reaction Endonucleolytic cleavage to 5'-phosphomonoester.. In terms of biological role, digests double-stranded RNA. Involved in the processing of primary rRNA transcript to yield the immediate precursors to the large and small rRNAs (23S and 16S). Processes some mRNAs, and tRNAs when they are encoded in the rRNA operon. Processes pre-crRNA and tracrRNA of type II CRISPR loci if present in the organism. The protein is Ribonuclease 3 of Vibrio cholerae serotype O1 (strain ATCC 39315 / El Tor Inaba N16961).